A 527-amino-acid polypeptide reads, in one-letter code: Estrogen receptor beta (527 aa).

The interval 1-145 (MDVKNSPSSL…SPSSKRDAHF (145 aa)) is modulating. Ser-84 and Ser-102 each carry phosphoserine; by MAPK. 2 NR C4-type zinc fingers span residues 146-166 (CAVC…CEGC) and 182-206 (CPAT…LRKC). Positions 146–211 (CAVCSDYASG…RLRKCYEVGM (66 aa)) form a DNA-binding region, nuclear receptor. In terms of domain architecture, NR LBD spans 261 to 495 (SPEQLVLTLL…DLLLEMLNAH (235 aa)).

This sequence belongs to the nuclear hormone receptor family. NR3 subfamily. As to quaternary structure, binds DNA as a homodimer. Can form a heterodimer with ESR1. Interacts with NCOA1, NCOA3, NCOA5 and NCOA6 coactivators, leading to a strong increase of transcription of target genes. Interacts with UBE1C and AKAP13. Interacts with DNTTIP2. Interacts with CCDC62 in the presence of estradiol/E2; this interaction seems to enhance the transcription of target genes. Interacts with DNAAF4. Interacts with PRMT2. Interacts with CCAR2 (via N-terminus) in a ligand-independent manner. Interacts with RBM39, in the presence of estradiol (E2). Interacts with STUB1/CHIP. In terms of processing, phosphorylation at Ser-84 and Ser-102 recruits NCOA1. As to expression, present in granulosa cells of antral follicles in various stages of follicular growth.

It is found in the nucleus. Functionally, nuclear hormone receptor. Binds estrogens with an affinity similar to that of ESR1ESR1/ER-alpha, and activates expression of reporter genes containing estrogen response elements (ERE) in an estrogen-dependent manner. The chain is Estrogen receptor beta (ESR2) from Bos taurus (Bovine).